The primary structure comprises 332 residues: UDP-N-acetylenolpyruvoylglucosamine reductase (332 aa).

Residues 55 to 221 form the FAD-binding PCMH-type domain; sequence VGGAADLYVA…TQATLQLAPG (167 aa). R200 is an active-site residue. S251 functions as the Proton donor in the catalytic mechanism. E321 is a catalytic residue.

This sequence belongs to the MurB family. Requires FAD as cofactor.

It is found in the cytoplasm. It catalyses the reaction UDP-N-acetyl-alpha-D-muramate + NADP(+) = UDP-N-acetyl-3-O-(1-carboxyvinyl)-alpha-D-glucosamine + NADPH + H(+). Its pathway is cell wall biogenesis; peptidoglycan biosynthesis. Functionally, cell wall formation. The protein is UDP-N-acetylenolpyruvoylglucosamine reductase of Nostoc punctiforme (strain ATCC 29133 / PCC 73102).